Consider the following 745-residue polypeptide: Copper-transporting ATPase (745 aa).

One can recognise an HMA domain in the interval 1–67; that stretch reads MKESFYIEGM…LIEKLGYSPK (67 aa). Over 1–83 the chain is Cytoplasmic; sequence MKESFYIEGM…KKEFFSPNVK (83 aa). Cu cation is bound by residues cysteine 12 and cysteine 15. Residues 84–104 traverse the membrane as a helical segment; the sequence is LALAVIFTLFVVYLSMGAMLS. Topologically, residues 105–124 are extracellular; that stretch reads PSLLPESLLTINHHSNFLNA. A helical transmembrane segment spans residues 125–144; the sequence is CLQLIGALIVMHLGRDFYIQ. The Cytoplasmic portion of the chain corresponds to 145-151; it reads GFKALWH. A helical transmembrane segment spans residues 152 to 172; sequence RQPNMSSLIAIGTSAALISSL. At 173-194 the chain is on the extracellular side; it reads WQLYLVYTNHYTDQWSYGHYYF. The chain crosses the membrane as a helical span at residues 195-215; it reads ESVCVILMFVMVGKRIENVSK. The Cytoplasmic segment spans residues 216 to 343; sequence DKALDAMQAL…KAEISRLADK (128 aa). Residues 344-366 form a helical membrane-spanning segment; the sequence is VSSVFVPSVIAIAVLAFVVWLII. The Extracellular portion of the chain corresponds to 367 to 379; sequence APKPDFWWNFRTA. A helical membrane pass occupies residues 380-397; sequence LEVFVSVLVISCPCALGL. The Cytoplasmic segment spans residues 398 to 685; sequence ATPMSILVAN…KLSQATIKNI (288 aa). The 4-aspartylphosphate intermediate role is filled by aspartate 435. Mg(2+) is bound by residues aspartate 631 and aspartate 635. A helical membrane pass occupies residues 686 to 705; that stretch reads KENLFWAFCYNSVFIPLACG. Residues 706 to 716 lie on the Extracellular side of the membrane; the sequence is VLYKANIMLSP. Residues 717 to 735 form a helical membrane-spanning segment; it reads AIAGLAMSLSSVSVVLNSQ. Over 736–745 the chain is Cytoplasmic; it reads RLRNFKIKDH.

Belongs to the cation transport ATPase (P-type) (TC 3.A.3) family. Type IB subfamily.

Its subcellular location is the cell membrane. The enzyme catalyses Cu(2+)(in) + ATP + H2O = Cu(2+)(out) + ADP + phosphate + H(+). In terms of biological role, probably involved in copper export. The chain is Copper-transporting ATPase (copA) from Helicobacter pylori (strain J99 / ATCC 700824) (Campylobacter pylori J99).